We begin with the raw amino-acid sequence, 511 residues long: Bifunctional purine biosynthesis protein PurH (511 aa).

Positions 1–145 (MKKRALVSVS…KNHKFVSVIV (145 aa)) constitute an MGS-like domain.

Belongs to the PurH family.

The catalysed reaction is (6R)-10-formyltetrahydrofolate + 5-amino-1-(5-phospho-beta-D-ribosyl)imidazole-4-carboxamide = 5-formamido-1-(5-phospho-D-ribosyl)imidazole-4-carboxamide + (6S)-5,6,7,8-tetrahydrofolate. It carries out the reaction IMP + H2O = 5-formamido-1-(5-phospho-D-ribosyl)imidazole-4-carboxamide. The protein operates within purine metabolism; IMP biosynthesis via de novo pathway; 5-formamido-1-(5-phospho-D-ribosyl)imidazole-4-carboxamide from 5-amino-1-(5-phospho-D-ribosyl)imidazole-4-carboxamide (10-formyl THF route): step 1/1. It functions in the pathway purine metabolism; IMP biosynthesis via de novo pathway; IMP from 5-formamido-1-(5-phospho-D-ribosyl)imidazole-4-carboxamide: step 1/1. The protein is Bifunctional purine biosynthesis protein PurH of Bacillus cereus (strain 03BB102).